Consider the following 633-residue polypeptide: Glutamyl-tRNA(Gln) amidotransferase subunit E (633 aa).

The protein belongs to the GatB/GatE family. GatE subfamily. Heterodimer of GatD and GatE.

It catalyses the reaction L-glutamyl-tRNA(Gln) + L-glutamine + ATP + H2O = L-glutaminyl-tRNA(Gln) + L-glutamate + ADP + phosphate + H(+). Allows the formation of correctly charged Gln-tRNA(Gln) through the transamidation of misacylated Glu-tRNA(Gln) in organisms which lack glutaminyl-tRNA synthetase. The reaction takes place in the presence of glutamine and ATP through an activated gamma-phospho-Glu-tRNA(Gln). The GatDE system is specific for glutamate and does not act on aspartate. The sequence is that of Glutamyl-tRNA(Gln) amidotransferase subunit E from Methanosarcina acetivorans (strain ATCC 35395 / DSM 2834 / JCM 12185 / C2A).